Here is a 126-residue protein sequence, read N- to C-terminus: Large ribosomal subunit protein mL52 (126 aa).

The N-terminal 28 residues, 1 to 28, are a transit peptide targeting the mitochondrion; it reads MLKITKICLASSATSTAQRSIALTAPRA.

It belongs to the mitochondrion-specific ribosomal protein mL52 family. Component of the mitochondrial ribosome large subunit (39S) which comprises a 16S rRNA and about 50 distinct proteins.

It is found in the mitochondrion. The protein is Large ribosomal subunit protein mL52 (mRpL52) of Drosophila melanogaster (Fruit fly).